Reading from the N-terminus, the 80-residue chain is MRALRVSQALVRSFSSTARNRFENRVAEKQKLFQEDNGLPVHLKGGATDNILYRVTMTLCLGGTLYSLYCLGWASFPHKK.

The transit peptide at 1–21 (MRALRVSQALVRSFSSTARNR) directs the protein to the mitochondrion. The Mitochondrial matrix segment spans residues 22–46 (FENRVAEKQKLFQEDNGLPVHLKGG). Residues 47 to 75 (ATDNILYRVTMTLCLGGTLYSLYCLGWAS) traverse the membrane as a helical segment. Topologically, residues 76–80 (FPHKK) are mitochondrial intermembrane.

The protein belongs to the cytochrome c oxidase VIIa family. Component of the complex IV (CIV, cytochrome c oxidase), a multisubunit enzyme composed of 14 subunits. The complex is composed of a catalytic core of 3 subunits MT-CO1, MT-CO2 and MT-CO3, encoded in the mitochondrial DNA, and 11 supernumerary subunits COX4I1 (or COX4I2), COX5A, COX5B, COX6A2 (or COX6A1), COX6B1 (or COX6B2), COX6C, COX7A1 (or COX7A2), COX7B, COX7C, COX8B and NDUFA4, which are encoded in the nuclear genome. The complex exists as a monomer or a dimer and forms supercomplexes (SCs) in the inner mitochondrial membrane with NADH-ubiquinone oxidoreductase (complex I, CI) and ubiquinol-cytochrome c oxidoreductase (cytochrome b-c1 complex, complex III, CIII), resulting in different assemblies (supercomplex SCI(1)III(2)IV(1) and megacomplex MCI(2)III(2)IV(2)).

It localises to the mitochondrion inner membrane. The protein operates within energy metabolism; oxidative phosphorylation. Its function is as follows. Component of the mitochondrial respiratory complex IV (CIV, also named cytochrome c oxidase complex), the last enzyme in the mitochondrial electron transport chain which drives oxidative phosphorylation. The CIV complex is the component of the respiratory chain that catalyzes the reduction of oxygen to water. Acts as an assembly factor that specifically drives the homodimerization of CIV complexes, mediating the formation of mitochondrial respiratory supercomplexes (respirasomes) containing two CIV: supercomplxes with two molecules of CIV show improved activity. Despite being highly expressed in brown adipose tissue, not required for thermogenesis. This chain is Cytochrome c oxidase subunit 7A1, mitochondrial (COX7A1), found in Bos taurus (Bovine).